We begin with the raw amino-acid sequence, 115 residues long: NADH-ubiquinone oxidoreductase chain 3 (115 aa).

Helical transmembrane passes span 3 to 23, 55 to 75, and 84 to 104; these read LMIT…IAFW, FFLV…LLPL, and LNTM…SLAY.

It belongs to the complex I subunit 3 family. As to quaternary structure, core subunit of respiratory chain NADH dehydrogenase (Complex I) which is composed of 45 different subunits. Interacts with TMEM186. Interacts with TMEM242.

Its subcellular location is the mitochondrion inner membrane. The enzyme catalyses a ubiquinone + NADH + 5 H(+)(in) = a ubiquinol + NAD(+) + 4 H(+)(out). In terms of biological role, core subunit of the mitochondrial membrane respiratory chain NADH dehydrogenase (Complex I) which catalyzes electron transfer from NADH through the respiratory chain, using ubiquinone as an electron acceptor. Essential for the catalytic activity of complex I. This chain is NADH-ubiquinone oxidoreductase chain 3, found in Ovis aries (Sheep).